The chain runs to 342 residues: N-acetyl-gamma-glutamyl-phosphate reductase (342 aa).

Cys149 is an active-site residue.

Belongs to the NAGSA dehydrogenase family. Type 1 subfamily.

The protein localises to the cytoplasm. It catalyses the reaction N-acetyl-L-glutamate 5-semialdehyde + phosphate + NADP(+) = N-acetyl-L-glutamyl 5-phosphate + NADPH + H(+). Its pathway is amino-acid biosynthesis; L-arginine biosynthesis; N(2)-acetyl-L-ornithine from L-glutamate: step 3/4. Functionally, catalyzes the NADPH-dependent reduction of N-acetyl-5-glutamyl phosphate to yield N-acetyl-L-glutamate 5-semialdehyde. This is N-acetyl-gamma-glutamyl-phosphate reductase from Nitrosospira multiformis (strain ATCC 25196 / NCIMB 11849 / C 71).